A 187-amino-acid polypeptide reads, in one-letter code: ECF RNA polymerase sigma factor SigK (187 aa).

The interval 30–96 is sigma-70 factor domain-2; that stretch reads YDHTCTRVYG…RAVDRVRAEQ (67 aa). The Interaction with polymerase core subunit RpoC signature appears at 53–56; sequence ETTQ. The interval 133 to 182 is sigma-70 factor domain-4; the sequence is CLDGLTDTQRQCIELAYYGGLTYAEVSQRLATNLSTIKSRMRDALRGLRN. A DNA-binding region (H-T-H motif) is located at residues 155 to 174; the sequence is YAEVSQRLATNLSTIKSRMR.

It belongs to the sigma-70 factor family. ECF subfamily. Interacts transiently with the RNA polymerase catalytic core formed by RpoA, RpoB, RpoC and RpoZ (2 alpha, 1 beta, 1 beta' and 1 omega subunit) to form the RNA polymerase holoenzyme that can initiate transcription. Interacts (via sigma-70 factor domain 4) with anti-sigma-K factor RskA.

Functionally, sigma factors are initiation factors that promote the attachment of RNA polymerase to specific initiation sites and are then released. Extracytoplasmic function (ECF) sigma factors are held in an inactive form by an anti-sigma factor until released by regulated intramembrane proteolysis. This is ECF RNA polymerase sigma factor SigK (sigK) from Mycobacterium ulcerans (strain Agy99).